Consider the following 136-residue polypeptide: Transcription antitermination protein NusB (136 aa).

This sequence belongs to the NusB family.

In terms of biological role, involved in transcription antitermination. Required for transcription of ribosomal RNA (rRNA) genes. Binds specifically to the boxA antiterminator sequence of the ribosomal RNA (rrn) operons. This is Transcription antitermination protein NusB from Treponema denticola (strain ATCC 35405 / DSM 14222 / CIP 103919 / JCM 8153 / KCTC 15104).